Consider the following 197-residue polypeptide: Imidazoleglycerol-phosphate dehydratase (197 aa).

This sequence belongs to the imidazoleglycerol-phosphate dehydratase family.

Its subcellular location is the cytoplasm. The enzyme catalyses D-erythro-1-(imidazol-4-yl)glycerol 3-phosphate = 3-(imidazol-4-yl)-2-oxopropyl phosphate + H2O. It participates in amino-acid biosynthesis; L-histidine biosynthesis; L-histidine from 5-phospho-alpha-D-ribose 1-diphosphate: step 6/9. This chain is Imidazoleglycerol-phosphate dehydratase, found in Chromobacterium violaceum (strain ATCC 12472 / DSM 30191 / JCM 1249 / CCUG 213 / NBRC 12614 / NCIMB 9131 / NCTC 9757 / MK).